We begin with the raw amino-acid sequence, 272 residues long: MASEFKKKLFWRAVVAEFLAMILFIFISIGSALGFHYPIKSNQTTGAVQDNVKVSLAFGLSIATLAQSVGHISGAHLNPAVTLGLLLSCQISILRAIMYIIAQCVGAIVATVILSGITSSLPDNSLGLNALAPGVNSGQGLGIEIIGTLQLVLCVLATTDRRRRRDLGDSGPLAIGFSVALGHLLAIDYTGCGINPARSFGSSVITHNFQDHWIFWVGPFIGAALAVLIYDFILAPRSSDLTDRVKVWTSGQVEEYDLDADDINSRVEMKPK.

The Cytoplasmic portion of the chain corresponds to 1 to 11 (MASEFKKKLFW). A helical membrane pass occupies residues 12–29 (RAVVAEFLAMILFIFISI). The Extracellular segment spans residues 30–48 (GSALGFHYPIKSNQTTGAV). N-linked (GlcNAc...) asparagine glycosylation is present at Asn-42. Residues 49 to 67 (QDNVKVSLAFGLSIATLAQ) traverse the membrane as a helical segment. The Cytoplasmic portion of the chain corresponds to 68–70 (SVG). An intramembrane segment occupies 71 to 84 (HISGAHLNPAVTLG). Positions 78 to 80 (NPA) match the NPA 1 motif. The Cytoplasmic segment spans residues 85 to 92 (LLLSCQIS). Residues 93-111 (ILRAIMYIIAQCVGAIVAT) form a helical membrane-spanning segment. Residues 112 to 135 (VILSGITSSLPDNSLGLNALAPGV) are Extracellular-facing. The chain crosses the membrane as a helical span at residues 136–155 (NSGQGLGIEIIGTLQLVLCV). Over 156–166 (LATTDRRRRRD) the chain is Cytoplasmic. Residues 167–184 (LGDSGPLAIGFSVALGHL) form a helical membrane-spanning segment. The Extracellular segment spans residues 185 to 189 (LAIDY). Residues 190–202 (TGCGINPARSFGS) lie within the membrane without spanning it. The NPA 2 signature appears at 195–197 (NPA). Topologically, residues 203 to 209 (SVITHNF) are extracellular. The helical transmembrane segment at 210–227 (QDHWIFWVGPFIGAALAV) threads the bilayer. Topologically, residues 228–272 (LIYDFILAPRSSDLTDRVKVWTSGQVEEYDLDADDINSRVEMKPK) are cytoplasmic. Ser-250 carries the phosphoserine modification. Tyr-256 bears the Phosphotyrosine mark. Ser-265 bears the Phosphoserine mark.

It belongs to the MIP/aquaporin (TC 1.A.8) family. In terms of assembly, homotetramer; each monomer provides an independent water pore. Component of the ankyrin-1 complex in the erythrocyte, composed of ANK1, RHCE, RHAG, SLC4A1, EPB42, GYPA, GYPB and AQP1. Interacts with EPHB2; involved in endolymph production in the inner ear. Identified in a complex with STOM. Interacts (via the N-terminal) with ANK1 (via ANK 1-5 repeats). Interacts (via the C-terminal) with EPB42. In terms of tissue distribution, detected in fetal kidney (at protein level). Detected in fetal kidney.

The protein localises to the cell membrane. The catalysed reaction is H2O(in) = H2O(out). It catalyses the reaction nitric oxide(out) = nitric oxide(in). It carries out the reaction CO2(out) = CO2(in). The enzyme catalyses glycerol(in) = glycerol(out). The catalysed reaction is H2O2(out) = H2O2(in). It catalyses the reaction K(+)(in) = K(+)(out). It carries out the reaction Na(+)(in) = Na(+)(out). In terms of biological role, forms a water channel that facilitates the transport of water across cell membranes, playing a crucial role in water homeostasis in various tissues. Could also be permeable to small solutes including hydrogen peroxide, glycerol and gases such as amonnia (NH3), nitric oxide (NO) and carbon dioxide (CO2). Recruited to the ankyrin-1 complex, a multiprotein complex of the erythrocyte membrane, it could be part of a CO2 metabolon, linking facilitated diffusion of CO2 across the membrane, anion exchange of Cl(-)/HCO3(-) and interconversion of dissolved CO2 and carbonic acid in the cytosol. In vitro, it shows non-selective gated cation channel activity and may be permeable to cations like K(+) and Na(+) in vivo. This chain is Aquaporin-1, found in Ovis aries (Sheep).